A 354-amino-acid chain; its full sequence is Phosphate acyltransferase (354 aa).

It belongs to the PlsX family. In terms of assembly, homodimer. Probably interacts with PlsY.

Its subcellular location is the cytoplasm. It carries out the reaction a fatty acyl-[ACP] + phosphate = an acyl phosphate + holo-[ACP]. It participates in lipid metabolism; phospholipid metabolism. In terms of biological role, catalyzes the reversible formation of acyl-phosphate (acyl-PO(4)) from acyl-[acyl-carrier-protein] (acyl-ACP). This enzyme utilizes acyl-ACP as fatty acyl donor, but not acyl-CoA. This chain is Phosphate acyltransferase, found in Nitrobacter hamburgensis (strain DSM 10229 / NCIMB 13809 / X14).